The sequence spans 1185 residues: ELMO domain-containing protein F (1185 aa).

Disordered regions lie at residues 88 to 133, 176 to 196, 361 to 409, 566 to 628, 642 to 805, 819 to 868, 883 to 989, and 1044 to 1114; these read QPSP…GNNN, ISTN…NTAE, NNNS…VENE, KSTD…NTKS, ETER…KSSG, LGEK…PYII, DLDF…TQVT, and QKQK…KPVL. Composition is skewed to low complexity over residues 94 to 127, 176 to 194, 361 to 406, and 587 to 613; these read STIH…SSPI, ISTN…NNNT, NNNS…NNNV, and PQSQ…SSSS. The region spanning 275-488 is the ELMO domain; sequence DRQNVLSFLN…KTRAVLSRIK (214 aa). The span at 648 to 665 shows a compositional bias: polar residues; sequence SLTGSNGITDGGDSNPNS. A compositionally biased stretch (low complexity) spans 688-699; that stretch reads SENGSSSSFSFE. The span at 721-732 shows a compositional bias: polar residues; that stretch reads FNSLTGELTMNI. Low complexity-rich tracts occupy residues 733 to 760 and 767 to 780; these read SSSS…PNVS and TTTT…TTTT. The span at 781-790 shows a compositional bias: polar residues; the sequence is DDQSQQQVPP. Positions 829-841 are enriched in basic residues; it reads KVKSKKEKKKKSK. Low complexity-rich tracts occupy residues 853–864, 912–974, 1053–1072, and 1096–1109; these read NNSANNSSYNNS, SSSN…QQPQ, DENQ…SSNE, and GRNS…SSLS.

The polypeptide is ELMO domain-containing protein F (elmoF) (Dictyostelium discoideum (Social amoeba)).